The following is a 689-amino-acid chain: Glycine--tRNA ligase beta subunit (689 aa).

The protein belongs to the class-II aminoacyl-tRNA synthetase family. As to quaternary structure, tetramer of two alpha and two beta subunits.

The protein resides in the cytoplasm. It carries out the reaction tRNA(Gly) + glycine + ATP = glycyl-tRNA(Gly) + AMP + diphosphate. In Shewanella baltica (strain OS155 / ATCC BAA-1091), this protein is Glycine--tRNA ligase beta subunit.